A 159-amino-acid chain; its full sequence is Pathogenesis-related leaf protein 4 (159 aa).

Residues 1–24 form the signal peptide; the sequence is MGLFNISLLLTCLMVLAIFHSCEA. Glutamine 25 is modified (pyrrolidone carboxylic acid). In terms of domain architecture, SCP spans 32-147; sequence LAVHNDARAQ…NGWWFISCNY (116 aa). Intrachain disulfides connect cysteine 68–cysteine 136, cysteine 109–cysteine 115, and cysteine 131–cysteine 145.

The protein belongs to the CRISP family.

Probably involved in the defense reaction of plants against pathogens. This Solanum lycopersicum (Tomato) protein is Pathogenesis-related leaf protein 4.